The sequence spans 400 residues: Acetate kinase (400 aa).

Residue N9 participates in Mg(2+) binding. K16 contacts ATP. Position 90 (R90) interacts with substrate. The active-site Proton donor/acceptor is D147. ATP is bound by residues H207–G211, D282–R284, and G330–N334. Residue E385 coordinates Mg(2+).

Belongs to the acetokinase family. Homodimer. Requires Mg(2+) as cofactor. Mn(2+) serves as cofactor.

It localises to the cytoplasm. The catalysed reaction is acetate + ATP = acetyl phosphate + ADP. It participates in metabolic intermediate biosynthesis; acetyl-CoA biosynthesis; acetyl-CoA from acetate: step 1/2. Functionally, catalyzes the formation of acetyl phosphate from acetate and ATP. Can also catalyze the reverse reaction. The polypeptide is Acetate kinase (Staphylococcus aureus (strain USA300)).